The primary structure comprises 472 residues: Methylenetetrahydrofolate--tRNA-(uracil-5-)-methyltransferase TrmFO (472 aa).

15–20 (GGGLAG) is an FAD binding site.

The protein belongs to the MnmG family. TrmFO subfamily. Requires FAD as cofactor.

It is found in the cytoplasm. It catalyses the reaction uridine(54) in tRNA + (6R)-5,10-methylene-5,6,7,8-tetrahydrofolate + NADH + H(+) = 5-methyluridine(54) in tRNA + (6S)-5,6,7,8-tetrahydrofolate + NAD(+). The enzyme catalyses uridine(54) in tRNA + (6R)-5,10-methylene-5,6,7,8-tetrahydrofolate + NADPH + H(+) = 5-methyluridine(54) in tRNA + (6S)-5,6,7,8-tetrahydrofolate + NADP(+). Catalyzes the folate-dependent formation of 5-methyl-uridine at position 54 (M-5-U54) in all tRNAs. This Rhizobium meliloti (strain 1021) (Ensifer meliloti) protein is Methylenetetrahydrofolate--tRNA-(uracil-5-)-methyltransferase TrmFO.